The sequence spans 480 residues: UDP-N-acetylmuramoylalanine--D-glutamate ligase (480 aa).

Residue 127-133 (GTNGKTT) participates in ATP binding.

This sequence belongs to the MurCDEF family.

It is found in the cytoplasm. It carries out the reaction UDP-N-acetyl-alpha-D-muramoyl-L-alanine + D-glutamate + ATP = UDP-N-acetyl-alpha-D-muramoyl-L-alanyl-D-glutamate + ADP + phosphate + H(+). The protein operates within cell wall biogenesis; peptidoglycan biosynthesis. In terms of biological role, cell wall formation. Catalyzes the addition of glutamate to the nucleotide precursor UDP-N-acetylmuramoyl-L-alanine (UMA). The polypeptide is UDP-N-acetylmuramoylalanine--D-glutamate ligase (Tropheryma whipplei (strain Twist) (Whipple's bacillus)).